Here is a 677-residue protein sequence, read N- to C-terminus: Protein PALS1 (677 aa).

Positions 1 to 347 (MTTSHMNGYV…AQIKSPPIKE (347 aa)) are required for the correct localization of PALS1 and PATJ at cell-cell contacts and the normal formation of tight junctions and adherens junctions. Positions 39-81 (ELGARTLPVRRSAQLEKIRQQQEDRRRREEEGRSRQELDLNSS) are disordered. The segment covering 51-76 (AQLEKIRQQQEDRRRREEEGRSRQEL) has biased composition (basic and acidic residues). L27 domains lie at 121–178 (ALLE…NRPS) and 180–236 (PYPL…MQLE). The PDZ domain maps to 258 to 338 (IVRIEKAKDI…VLSFVLIPSA (81 aa)). An SH3 domain is found at 347–419 (ETVVHVKAHF…PGKSFQQQRE (73 aa)). The region spanning 481–662 (KRPIALIGPP…SYQELLRLIN (182 aa)) is the Guanylate kinase-like domain. Residue 488–495 (GPPNCGQN) participates in ATP binding. The segment at 506–526 (PDRFAGPVPHTTRSRRDAEAN) is disordered.

This sequence belongs to the MAGUK family. As to expression, expressed in the retina and in the neural tube.

It localises to the apical cell membrane. Its subcellular location is the cell junction. The protein resides in the tight junction. Its function is as follows. Plays a role in tight junction biogenesis and in the establishment of cell polarity in epithelial cells. Also involved in adherens junction biogenesis. Required for polarized epithelial organization, cell-cell adhesion and remodeling of myocardial cells during heart tube elongation during embryogenesis. Functions in cellular patterning of the retina and development of the retinal pigmented epithelium. Also required for embryo body axis specification. The sequence is that of Protein PALS1 (pals1a) from Danio rerio (Zebrafish).